The primary structure comprises 225 residues: Small ribosomal subunit protein uS7 (225 aa).

Residue S2 is modified to N-acetylserine. T27 is modified (phosphothreonine). Glycyl lysine isopeptide (Lys-Gly) (interchain with G-Cter in ubiquitin) cross-links involve residues K45 and K203.

Belongs to the universal ribosomal protein uS7 family. Component of the small ribosomal subunit (SSU). Mature yeast ribosomes consist of a small (40S) and a large (60S) subunit. The 40S small subunit contains 1 molecule of ribosomal RNA (18S rRNA) and 33 different proteins (encoded by 57 genes). The large 60S subunit contains 3 rRNA molecules (25S, 5.8S and 5S rRNA) and 46 different proteins (encoded by 81 genes). In terms of processing, N-terminally acetylated by acetyltransferase NatA.

It is found in the cytoplasm. Functionally, component of the ribosome, a large ribonucleoprotein complex responsible for the synthesis of proteins in the cell. The small ribosomal subunit (SSU) binds messenger RNAs (mRNAs) and translates the encoded message by selecting cognate aminoacyl-transfer RNA (tRNA) molecules. The large subunit (LSU) contains the ribosomal catalytic site termed the peptidyl transferase center (PTC), which catalyzes the formation of peptide bonds, thereby polymerizing the amino acids delivered by tRNAs into a polypeptide chain. The nascent polypeptides leave the ribosome through a tunnel in the LSU and interact with protein factors that function in enzymatic processing, targeting, and the membrane insertion of nascent chains at the exit of the ribosomal tunnel. In Saccharomyces cerevisiae (strain ATCC 204508 / S288c) (Baker's yeast), this protein is Small ribosomal subunit protein uS7.